The following is a 183-amino-acid chain: Translocon-associated protein subunit beta (183 aa).

The signal sequence occupies residues 1–17 (MRLLASVLLALFAVSHA). The Lumenal segment spans residues 18 to 149 (EEGARLLASK…DRRFSPHFLD (132 aa)). N88 and N104 each carry an N-linked (GlcNAc...) asparagine glycan. Residues 150 to 169 (WAAFGVMTLPSIGIPLLLWY) form a helical membrane-spanning segment. Residues 170–183 (SSKRKYDTPKSKKN) lie on the Cytoplasmic side of the membrane.

The protein belongs to the TRAP-beta family. As to quaternary structure, heterotetramer of TRAP-alpha, TRAP-beta, TRAP-delta and TRAP-gamma. Interacts with STING1.

The protein localises to the endoplasmic reticulum membrane. TRAP proteins are part of a complex whose function is to bind calcium to the ER membrane and thereby regulate the retention of ER resident proteins. In Canis lupus familiaris (Dog), this protein is Translocon-associated protein subunit beta (SSR2).